Reading from the N-terminus, the 483-residue chain is Phloretin 2'-O-glucosyltransferase (483 aa).

The Proton acceptor role is filled by histidine 15. Histidine 15 is an an anthocyanidin binding site. Catalysis depends on aspartate 118, which acts as the Charge relay. Residues threonine 140, alanine 360, glutamine 362, histidine 377, tryptophan 380, asparagine 381, serine 382, and glutamate 385 each contribute to the UDP-alpha-D-glucose site. An an anthocyanidin-binding site is contributed by alanine 400. UDP-alpha-D-glucose contacts are provided by glutamate 401 and glutamine 402.

This sequence belongs to the UDP-glycosyltransferase family.

The enzyme catalyses phloretin + UDP-alpha-D-glucose = phlorizin + UDP + H(+). Its function is as follows. Glycosyltransferase that possesses phloretin 2'-O-glycosyltransferase activity. Converts phloretin to phlorizin (phloretin 2'-O-glucoside), a potent antioxidant. Is specific for phloretin and does not possess glycosyltransferase activity toward caffeic acid, catechin, chlorogenic acid, 2-coumaric acid, 3-coumaric acid, 4-coumaric acid, cyanidin, 3,4-dihydroxyhydrocinnamic acid, epicatechin, 3-hydroxybenzoic acid, naringenin, 3,4-dihydroxybenzoic acid, quercetin and rutin. Can glycosylate phloretin in the presence of UDP-glucose, UDP-xylose and UDP-galactose. The chain is Phloretin 2'-O-glucosyltransferase from Malus domestica (Apple).